The primary structure comprises 542 residues: Chaperonin GroEL (542 aa).

ATP contacts are provided by residues 30–33, Lys51, 87–91, Gly415, 480–482, and Asp496; these read TLGP, DGTTT, and NAA.

Belongs to the chaperonin (HSP60) family. As to quaternary structure, forms a cylinder of 14 subunits composed of two heptameric rings stacked back-to-back. Interacts with the co-chaperonin GroES.

The protein localises to the cytoplasm. It catalyses the reaction ATP + H2O + a folded polypeptide = ADP + phosphate + an unfolded polypeptide.. Together with its co-chaperonin GroES, plays an essential role in assisting protein folding. The GroEL-GroES system forms a nano-cage that allows encapsulation of the non-native substrate proteins and provides a physical environment optimized to promote and accelerate protein folding. This Tremblaya princeps protein is Chaperonin GroEL.